The following is a 139-amino-acid chain: Putative translationally-controlled tumor protein-like protein TPT1P8 (139 aa).

Residues 1 to 139 (MIIFQDLISH…KTTSSLLVKT (139 aa)) enclose the TCTP domain. The segment covering 40 to 51 (TGNTDDSLIGRN) has biased composition (polar residues). Residues 40-60 (TGNTDDSLIGRNSSSESTEDE) are disordered.

This sequence belongs to the TCTP family.

This chain is Putative translationally-controlled tumor protein-like protein TPT1P8 (TPT1P8), found in Homo sapiens (Human).